We begin with the raw amino-acid sequence, 179 residues long: MLSYFKELSLRRPAWLLLATLACTLEVTGLYFQHKLGLIPCVMCIYERVALTGLLIAGLIALIAPNFFLFRWLALVLWGFSAFKGLSLSIKHYDYQANPSPWNQCEFKPQFPQTIPLDEWFPNIFAAGTVNCSEKQWQMLGWGMPEWLIVAFSLFMLFFLIVFMSQFKRAKPQYRSVFR.

The Cytoplasmic portion of the chain corresponds to 1–14; it reads MLSYFKELSLRRPA. The chain crosses the membrane as a helical span at residues 15 to 31; it reads WLLLATLACTLEVTGLY. At 32 to 49 the chain is on the periplasmic side; sequence FQHKLGLIPCVMCIYERV. Cysteines 41 and 44 form a disulfide. Residues 50 to 65 form a helical membrane-spanning segment; it reads ALTGLLIAGLIALIAP. Over 66 to 72 the chain is Cytoplasmic; that stretch reads NFFLFRW. Residues 73–90 traverse the membrane as a helical segment; that stretch reads LALVLWGFSAFKGLSLSI. Topologically, residues 91 to 146 are periplasmic; it reads KHYDYQANPSPWNQCEFKPQFPQTIPLDEWFPNIFAAGTVNCSEKQWQMLGWGMPE. Cysteines 105 and 132 form a disulfide. Residues 147 to 165 traverse the membrane as a helical segment; that stretch reads WLIVAFSLFMLFFLIVFMS. Residues 166-179 are Cytoplasmic-facing; the sequence is QFKRAKPQYRSVFR.

This sequence belongs to the DsbB family.

It localises to the cell inner membrane. Functionally, required for disulfide bond formation in some periplasmic proteins. Acts by oxidizing the DsbA protein. The polypeptide is Disulfide bond formation protein B (Haemophilus ducreyi (strain 35000HP / ATCC 700724)).